Consider the following 530-residue polypeptide: Alkyl hydroperoxide reductase subunit F (530 aa).

Residue 214 to 229 (DVLVVGGGPAGSAAAV) participates in FAD binding. Cysteine 344 and cysteine 347 are disulfide-bonded. Position 356 to 370 (356 to 370 (RVAVIGGGNSGVEAA)) interacts with NAD(+). 477-487 (TDVPGVFAAGD) lines the FAD pocket.

Belongs to the class-II pyridine nucleotide-disulfide oxidoreductase family. In terms of assembly, homodimer. Requires FAD as cofactor.

Serves to protect the cell against DNA damage by alkyl hydroperoxides. It can use either NADH or NADPH as electron donor for direct reduction of redox dyes or of alkyl hydroperoxides when combined with the AhpC protein. The chain is Alkyl hydroperoxide reductase subunit F (ahpF) from Xanthomonas campestris pv. phaseoli.